The sequence spans 876 residues: Leucine--tRNA ligase (876 aa).

The 'HIGH' region motif lies at 42 to 52; the sequence is PYPSGKLHMGH. The 'KMSKS' region signature appears at 634 to 638; it reads KMSKS. An ATP-binding site is contributed by Lys-637.

It belongs to the class-I aminoacyl-tRNA synthetase family.

It is found in the cytoplasm. The enzyme catalyses tRNA(Leu) + L-leucine + ATP = L-leucyl-tRNA(Leu) + AMP + diphosphate. The polypeptide is Leucine--tRNA ligase (Neisseria meningitidis serogroup C / serotype 2a (strain ATCC 700532 / DSM 15464 / FAM18)).